We begin with the raw amino-acid sequence, 56 residues long: Ovomucoid (56 aa).

One can recognise a Kazal-like domain in the interval 6-56; the sequence is VDCSEYPKPACTMEQRPLCGSDNKTYGNKCNFCNAVVESNGTLTLSHFGKC. Cystine bridges form between cysteine 8–cysteine 38, cysteine 16–cysteine 35, and cysteine 24–cysteine 56. N-linked (GlcNAc...) asparagine glycosylation is present at asparagine 45.

The protein localises to the secreted. This chain is Ovomucoid, found in Afropavo congensis (Congo peafowl).